The chain runs to 748 residues: Bifunctional lysine-specific demethylase and histidyl-hydroxylase NO66 (748 aa).

Disordered stretches follow at residues 65–135 (NIDR…RSTY) and 160–264 (TEVV…DDEG). Residues 94–110 (LENKKPKVEVKKEDEKS) are compositionally biased toward basic and acidic residues. Residues 124-134 (LVQNETSTRST) show a composition bias toward polar residues. A compositionally biased stretch (acidic residues) spans 163-193 (VESDDEQMIGLDSDEELEDEDETDIDEDEMM). Residues 194–203 (IDPKDIERYI) are compositionally biased toward basic and acidic residues. Residues 207–264 (SVEDEEDMEDEEIEDEEFEDEEFEDEEEEADEQEEEEEDVSDEESVVSEMDADSDDEG) are compositionally biased toward acidic residues. The JmjC domain occupies 399–543 (QLVNPQTYDD…NLMEKVVPEA (145 aa)). His442, Asp444, and His509 together coordinate Fe cation.

This sequence belongs to the ROX family. NO66 subfamily. Fe(2+) serves as cofactor.

It is found in the nucleus. It catalyses the reaction N(6),N(6)-dimethyl-L-lysyl(36)-[histone H3] + 2 2-oxoglutarate + 2 O2 = L-lysyl(36)-[histone H3] + 2 formaldehyde + 2 succinate + 2 CO2. Its function is as follows. Oxygenase that can act as both a histone lysine demethylase and a ribosomal histidine hydroxylase. Specifically demethylates 'Lys-4' (H3K4me) and 'Lys-36' (H3K36me) of histone H3, thereby playing a central role in histone code. Mediates response to multiple stress stimuli, including heat shock and osmotic, oxidative, and ethanol stress. In Caenorhabditis elegans, this protein is Bifunctional lysine-specific demethylase and histidyl-hydroxylase NO66 (jmjc-1).